Consider the following 291-residue polypeptide: Pyridoxal 5'-phosphate synthase subunit PdxS (291 aa).

Aspartate 23 contacts D-ribose 5-phosphate. Lysine 80 (schiff-base intermediate with D-ribose 5-phosphate) is an active-site residue. D-ribose 5-phosphate is bound at residue glycine 152. Arginine 164 provides a ligand contact to D-glyceraldehyde 3-phosphate. Residues glycine 213 and 234–235 (GS) contribute to the D-ribose 5-phosphate site.

Belongs to the PdxS/SNZ family. In terms of assembly, in the presence of PdxT, forms a dodecamer of heterodimers.

The catalysed reaction is aldehydo-D-ribose 5-phosphate + D-glyceraldehyde 3-phosphate + L-glutamine = pyridoxal 5'-phosphate + L-glutamate + phosphate + 3 H2O + H(+). The protein operates within cofactor biosynthesis; pyridoxal 5'-phosphate biosynthesis. Functionally, catalyzes the formation of pyridoxal 5'-phosphate from ribose 5-phosphate (RBP), glyceraldehyde 3-phosphate (G3P) and ammonia. The ammonia is provided by the PdxT subunit. Can also use ribulose 5-phosphate and dihydroxyacetone phosphate as substrates, resulting from enzyme-catalyzed isomerization of RBP and G3P, respectively. The sequence is that of Pyridoxal 5'-phosphate synthase subunit PdxS from Bifidobacterium adolescentis (strain ATCC 15703 / DSM 20083 / NCTC 11814 / E194a).